The following is a 167-amino-acid chain: Centrin-3 (167 aa).

4 EF-hand domains span residues 25–60 (EQKQEIKDAFELFDTDKDQAIDYHELKVAMRALGFD), 61–96 (VKKADVLKILKDYDREATGKITFEDFNEVVTDWILE), 98–133 (DPHEEILKAFKLFDDDDSGKISLRNLRRVARELGEN), and 134–167 (MSDEELRAMIEEFDKDGDGEINQEEFIAIMTGDI). D38, D40, D42, and E49 together coordinate Ca(2+). At S135 the chain carries Phosphoserine. The Ca(2+) site is built by D147, D149, D151, E153, and E158.

It belongs to the centrin family. As to quaternary structure, monomer. Component of the TREX-2 complex (transcription and export complex 2), composed of at least ENY2, GANP, PCID2, SEM1, and either centrin CETN2 or CETN3. Interacts with USP49.

The protein resides in the cytoplasm. It localises to the cytoskeleton. Its subcellular location is the microtubule organizing center. It is found in the centrosome. The protein localises to the nucleus. The protein resides in the nucleolus. It localises to the nucleus envelope. Its subcellular location is the nuclear pore complex. It is found in the centriole. Plays a fundamental role in microtubule-organizing center structure and function. Functionally, as a component of the TREX-2 complex, involved in the export of mRNAs to the cytoplasm through the nuclear pores. This Mus musculus (Mouse) protein is Centrin-3 (Cetn3).